Consider the following 671-residue polypeptide: Envelope glycoprotein (671 aa).

The signal sequence occupies residues 1-22 (MKPPAGMVFLWVLTSLGAGIGA). Residues 23-611 (KIVKEGNPHQ…YNKSPWFTTL (589 aa)) lie on the Extracellular side of the membrane. Intrachain disulfides connect cysteine 121–cysteine 142 and cysteine 134–cysteine 147. N-linked (GlcNAc...) asparagine; by host glycosylation is found at asparagine 169 and asparagine 281. Residues 265–310 (VQPPRAPTQTPRVNPVNSTLSPSLGYPAPAPGPRPPYPTSPSRPGT) form a disordered region. The span at 271–286 (PTQTPRVNPVNSTLSP) shows a compositional bias: polar residues. Residues 292–305 (APAPGPRPPYPTSP) are compositionally biased toward pro residues. N-linked (GlcNAc...) asparagine; by host glycans are attached at residues asparagine 326 and asparagine 331. The CXXC motif lies at 336–339 (CWLC). 4 N-linked (GlcNAc...) asparagine; by host glycosylation sites follow: asparagine 355, asparagine 358, asparagine 415, and asparagine 435. Residues 473–493 (VSLTVALLLGGLTMGSLAAGI) are fusion peptide. 2 coiled-coil regions span residues 501–550 (IETN…LLFL) and 560–596 (KEEC…SQQG). The segment at 539-555 (LQNRRGLDLLFLQEGGL) is immunosuppression. The CX6CC signature appears at 556-564 (CAALKEECC). A helical transmembrane segment spans residues 612 to 632 (VSSLMVPLILLLLILMFGPCI). Cysteine 631 is lipidated: S-palmitoyl cysteine; by host. Residues 633-671 (LNHLLQFIRERLSVIQALVLTQQYHQLRQFDAERPDAIE) are Cytoplasmic-facing. The YXXL motif; contains endocytosis signal motif lies at 656 to 659 (YHQL).

The mature envelope protein (Env) consists of a trimer of SU-TM heterodimers attached by noncovalent interactions or by a labile interchain disulfide bond. In terms of processing, specific enzymatic cleavages in vivo yield mature proteins. Envelope glycoproteins are synthesized as an inactive precursor that is N-glycosylated and processed likely by host cell furin or by a furin-like protease in the Golgi to yield the mature SU and TM proteins. The cleavage site between SU and TM requires the minimal sequence [KR]-X-[KR]-R. The R-peptide is released from the C-terminus of the cytoplasmic tail of the TM protein upon particle formation as a result of proteolytic cleavage by the viral protease. Cleavage of this peptide is required for TM to become fusogenic. Post-translationally, the transmembrane protein is palmitoylated. The R-peptide is palmitoylated.

Its subcellular location is the virion membrane. The protein localises to the host cell membrane. In terms of biological role, the surface protein (SU) attaches the virus to the host cell by binding to its receptor. This interaction triggers the refolding of the transmembrane protein (TM) and is thought to activate its fusogenic potential by unmasking its fusion peptide. Fusion occurs at the host cell plasma membrane. Functionally, the transmembrane protein (TM) acts as a class I viral fusion protein. Under the current model, the protein has at least 3 conformational states: pre-fusion native state, pre-hairpin intermediate state, and post-fusion hairpin state. During viral and target cell membrane fusion, the coiled coil regions (heptad repeats) assume a trimer-of-hairpins structure, positioning the fusion peptide in close proximity to the C-terminal region of the ectodomain. The formation of this structure appears to drive apposition and subsequent fusion of viral and target cell membranes. Membranes fusion leads to delivery of the nucleocapsid into the cytoplasm. The sequence is that of Envelope glycoprotein (env) from Felidae (cat family).